The following is a 158-amino-acid chain: Ribosome maturation factor RimP (158 aa).

It belongs to the RimP family.

Its subcellular location is the cytoplasm. Its function is as follows. Required for maturation of 30S ribosomal subunits. This is Ribosome maturation factor RimP from Pseudomonas putida (strain ATCC 47054 / DSM 6125 / CFBP 8728 / NCIMB 11950 / KT2440).